A 215-amino-acid chain; its full sequence is Small ribosomal subunit protein uS7 (215 aa).

It belongs to the universal ribosomal protein uS7 family. Part of the 30S ribosomal subunit.

In terms of biological role, one of the primary rRNA binding proteins, it binds directly to 16S rRNA where it nucleates assembly of the head domain of the 30S subunit. Is located at the subunit interface close to the decoding center. This chain is Small ribosomal subunit protein uS7, found in Pyrococcus abyssi (strain GE5 / Orsay).